The sequence spans 130 residues: Fluoride-specific ion channel FluC (130 aa).

A run of 4 helical transmembrane segments spans residues 2–22, 36–56, 71–91, and 100–120; these read GLLL…RFAL, GILL…AFLI, FLLV…SLDI, and IFIA…AVIL. Positions 79 and 82 each coordinate Na(+).

Belongs to the fluoride channel Fluc/FEX (TC 1.A.43) family.

The protein localises to the cell inner membrane. The enzyme catalyses fluoride(in) = fluoride(out). Its activity is regulated as follows. Na(+) is not transported, but it plays an essential structural role and its presence is essential for fluoride channel function. Its function is as follows. Fluoride-specific ion channel. Important for reducing fluoride concentration in the cell, thus reducing its toxicity. The polypeptide is Fluoride-specific ion channel FluC (Francisella tularensis subsp. tularensis (strain FSC 198)).